The sequence spans 434 residues: Serine hydroxymethyltransferase 2 (434 aa).

(6S)-5,6,7,8-tetrahydrofolate-binding positions include Leu-136 and 140 to 142 (GHL). At Lys-245 the chain carries N6-(pyridoxal phosphate)lysine.

It belongs to the SHMT family. Homodimer. Pyridoxal 5'-phosphate is required as a cofactor.

Its subcellular location is the cytoplasm. The catalysed reaction is (6R)-5,10-methylene-5,6,7,8-tetrahydrofolate + glycine + H2O = (6S)-5,6,7,8-tetrahydrofolate + L-serine. The protein operates within one-carbon metabolism; tetrahydrofolate interconversion. It functions in the pathway amino-acid biosynthesis; glycine biosynthesis; glycine from L-serine: step 1/1. Catalyzes the reversible interconversion of serine and glycine with tetrahydrofolate (THF) serving as the one-carbon carrier. This reaction serves as the major source of one-carbon groups required for the biosynthesis of purines, thymidylate, methionine, and other important biomolecules. Also exhibits THF-independent aldolase activity toward beta-hydroxyamino acids, producing glycine and aldehydes, via a retro-aldol mechanism. This chain is Serine hydroxymethyltransferase 2, found in Rhodopseudomonas palustris (strain ATCC BAA-98 / CGA009).